The chain runs to 323 residues: tRNA U34 carboxymethyltransferase (323 aa).

Carboxy-S-adenosyl-L-methionine-binding positions include Lys-91, Trp-105, Lys-110, Gly-130, 152–154 (DPT), 181–182 (IE), Met-196, Tyr-200, and Arg-315.

Belongs to the class I-like SAM-binding methyltransferase superfamily. CmoB family. As to quaternary structure, homotetramer.

The catalysed reaction is carboxy-S-adenosyl-L-methionine + 5-hydroxyuridine(34) in tRNA = 5-carboxymethoxyuridine(34) in tRNA + S-adenosyl-L-homocysteine + H(+). Functionally, catalyzes carboxymethyl transfer from carboxy-S-adenosyl-L-methionine (Cx-SAM) to 5-hydroxyuridine (ho5U) to form 5-carboxymethoxyuridine (cmo5U) at position 34 in tRNAs. This Salmonella paratyphi A (strain ATCC 9150 / SARB42) protein is tRNA U34 carboxymethyltransferase.